A 549-amino-acid polypeptide reads, in one-letter code: Endoplasmic reticulum mannosyl-oligosaccharide 1,2-alpha-mannosidase (549 aa).

Topologically, residues 1–4 (MKNS) are cytoplasmic. The chain crosses the membrane as a helical; Signal-anchor for type II membrane protein span at residues 5–24 (VGISIATIVAIIAAIYYVPW). Over 25–354 (YEHFERKSPG…LLASGSTEGL (330 aa)) the chain is Lumenal. 3 N-linked (GlcNAc...) asparagine glycosylation sites follow: Asn-96, Asn-155, and Asn-224. The cysteines at positions 340 and 385 are disulfide-linked. Residue Glu-399 is the Proton donor of the active site. Cys-468 and Cys-471 are oxidised to a cystine. Thr-525 serves as a coordination point for Ca(2+).

It belongs to the glycosyl hydrolase 47 family. As to quaternary structure, homodimer. Ca(2+) is required as a cofactor.

Its subcellular location is the endoplasmic reticulum membrane. The enzyme catalyses N(4)-(alpha-D-Man-(1-&gt;2)-alpha-D-Man-(1-&gt;2)-alpha-D-Man-(1-&gt;3)-[alpha-D-Man-(1-&gt;2)-alpha-D-Man-(1-&gt;3)-[alpha-D-Man-(1-&gt;2)-alpha-D-Man-(1-&gt;6)]-alpha-D-Man-(1-&gt;6)]-beta-D-Man-(1-&gt;4)-beta-D-GlcNAc-(1-&gt;4)-beta-D-GlcNAc)-L-asparaginyl-[protein] (N-glucan mannose isomer 9A1,2,3B1,2,3) + 4 H2O = N(4)-(alpha-D-Man-(1-&gt;3)-[alpha-D-Man-(1-&gt;3)-[alpha-D-Man-(1-&gt;6)]-alpha-D-Man-(1-&gt;6)]-beta-D-Man-(1-&gt;4)-beta-D-GlcNAc-(1-&gt;4)-beta-D-GlcNAc)-L-asparaginyl-[protein] (N-glucan mannose isomer 5A1,2) + 4 beta-D-mannose. It catalyses the reaction N(4)-(alpha-D-Man-(1-&gt;2)-alpha-D-Man-(1-&gt;2)-alpha-D-Man-(1-&gt;3)-[alpha-D-Man-(1-&gt;3)-[alpha-D-Man-(1-&gt;2)-alpha-D-Man-(1-&gt;6)]-alpha-D-Man-(1-&gt;6)]-beta-D-Man-(1-&gt;4)-beta-D-GlcNAc-(1-&gt;4)-beta-D-GlcNAc)-L-asparaginyl-[protein] (N-glucan mannose isomer 8A1,2,3B1,3) + 3 H2O = N(4)-(alpha-D-Man-(1-&gt;3)-[alpha-D-Man-(1-&gt;3)-[alpha-D-Man-(1-&gt;6)]-alpha-D-Man-(1-&gt;6)]-beta-D-Man-(1-&gt;4)-beta-D-GlcNAc-(1-&gt;4)-beta-D-GlcNAc)-L-asparaginyl-[protein] (N-glucan mannose isomer 5A1,2) + 3 beta-D-mannose. Its pathway is protein modification; protein glycosylation. Involved in glycoprotein quality control as it is important for the targeting of misfolded glycoproteins for degradation. It primarily trims a single alpha-1,2-linked mannose residue from Man(9)GlcNAc(2) to produce Man(8)GlcNAc(2), but at high enzyme concentrations it further trims the carbohydrates to Man(5)GlcNAc(2). In Saccharomyces cerevisiae (strain ATCC 204508 / S288c) (Baker's yeast), this protein is Endoplasmic reticulum mannosyl-oligosaccharide 1,2-alpha-mannosidase (MNS1).